A 319-amino-acid polypeptide reads, in one-letter code: Small ribosomal subunit protein mS35 (319 aa).

The transit peptide at 1-30 directs the protein to the mitochondrion; that stretch reads MKVPLGLWKVSRGNLWSTQKRVLTMSRCLN.

This sequence belongs to the mitochondrion-specific ribosomal protein mS35 family. As to quaternary structure, component of the mitochondrial small ribosomal subunit (mt-SSU). Mature yeast 74S mitochondrial ribosomes consist of a small (37S) and a large (54S) subunit. The 37S small subunit contains a 15S ribosomal RNA (15S mt-rRNA) and 34 different proteins. The 54S large subunit contains a 21S rRNA (21S mt-rRNA) and 46 different proteins.

The protein localises to the mitochondrion. Component of the mitochondrial ribosome (mitoribosome), a dedicated translation machinery responsible for the synthesis of mitochondrial genome-encoded proteins, including at least some of the essential transmembrane subunits of the mitochondrial respiratory chain. The mitoribosomes are attached to the mitochondrial inner membrane and translation products are cotranslationally integrated into the membrane. This chain is Small ribosomal subunit protein mS35 (RSM24), found in Saccharomyces cerevisiae (strain ATCC 204508 / S288c) (Baker's yeast).